Here is a 195-residue protein sequence, read N- to C-terminus: Ras-related protein Rab-31 (195 aa).

Gly-16, Gly-18, Lys-19, Ser-20, Ser-21, Asp-32, and His-33 together coordinate GTP. Ser-20 provides a ligand contact to Mg(2+). 2 short sequence motifs (switch) span residues 30–42 (HFDH…IGAS) and 63–79 (AGQE…YRGS). Phosphoserine is present on Ser-36. GTP-binding residues include Thr-38, Gly-64, Asn-119, Asp-122, Ala-150, and Lys-151. Residue Thr-38 participates in Mg(2+) binding. 2 S-geranylgeranyl cysteine lipidation sites follow: Cys-194 and Cys-195.

This sequence belongs to the small GTPase superfamily. Rab family. Interacts (in GDP-bound form) with RIN3 and GAPVD1, which function as guanine exchange factors (GEF). Interacts (in GTP-bound form) with EEA1. Interacts with NGFR. Interacts with EGFR. Interacts with OCRL. Interacts (in GTP-bound form) with APPL2; interaction contributes to or enhances recruitment of APPL2 to the phagosomes; interaction enhances Fc-gamma receptor-mediated phagocytosis through PI3K/Akt signaling in macrophages. It depends on Mg(2+) as a cofactor. Detected in brain astrocytes, spleen and intestine (at protein level).

The protein localises to the early endosome. The protein resides in the golgi apparatus. Its subcellular location is the trans-Golgi network. It is found in the trans-Golgi network membrane. It localises to the cytoplasmic vesicle. The protein localises to the phagosome. The protein resides in the phagosome membrane. It catalyses the reaction GTP + H2O = GDP + phosphate + H(+). Regulated by guanine nucleotide exchange factors (GEFs) including RIN3 and GAPVD1 which promote the exchange of bound GDP for free GTP. Regulated by GTPase activating proteins (GAPs) which increase the GTP hydrolysis activity. Inhibited by GDP dissociation inhibitors (GDIs) which prevent Rab-GDP dissociation. The small GTPases Rab are key regulators of intracellular membrane trafficking, from the formation of transport vesicles to their fusion with membranes. Rabs cycle between an inactive GDP-bound form and an active GTP-bound form that is able to recruit to membranes different set of downstream effectors directly responsible for vesicle formation, movement, tethering and fusion. Required for the integrity and for normal function of the Golgi apparatus and the trans-Golgi network. Plays a role in insulin-stimulated translocation of GLUT4 to the cell membrane. Plays a role in the maturation of phagosomes that engulf pathogens, such as S.aureus and Mycobacterium. Plays a role in M6PR transport from the trans-Golgi network to endosomes. Plays a role in the internalization of EGFR from the cell membrane into endosomes. The chain is Ras-related protein Rab-31 from Rattus norvegicus (Rat).